A 1321-amino-acid chain; its full sequence is Lysine-specific demethylase 3A (1321 aa).

Residues Ser-264 and Ser-325 each carry the phosphoserine modification. 3 disordered regions span residues 307-336 (ATPP…IPQG), 383-402 (LTEP…QENR), and 438-472 (KHLE…GKKV). The span at 316-327 (QQSTPQAANSPP) shows a compositional bias: polar residues. Ser-445 is modified (phosphoserine). The segment at 662-687 (CDVCDTTIFNLHWVCPRCGFGVCVDC) adopts a C6-type zinc-finger fold. Ser-766 is modified (phosphoserine). Positions 885–889 (LRNLL) match the LXXLL motif motif. The residue at position 895 (Lys-895) is an N6-acetyllysine. Residues 1058 to 1281 (MPSRFDDLMA…HCFWLTQEFR (224 aa)) form the JmjC domain. Residues His-1120, Asp-1122, and His-1249 each contribute to the Fe cation site.

This sequence belongs to the JHDM2 histone demethylase family. In terms of assembly, interacts with VRK1. The cofactor is Fe(2+).

The protein resides in the cytoplasm. Its subcellular location is the nucleus. The catalysed reaction is N(6),N(6)-dimethyl-L-lysyl(9)-[histone H3] + 2 2-oxoglutarate + 2 O2 = L-lysyl(9)-[histone H3] + 2 formaldehyde + 2 succinate + 2 CO2. In terms of biological role, histone demethylase that specifically demethylates 'Lys-9' of histone H3, thereby playing a central role in histone code. Preferentially demethylates mono- and dimethylated H3 'Lys-9' residue, with a preference for dimethylated residue, while it has weak or no activity on trimethylated H3 'Lys-9'. Demethylation of Lys residue generates formaldehyde and succinate. Involved in hormone-dependent transcriptional activation, by participating in recruitment to androgen-receptor target genes, resulting in H3 'Lys-9' demethylation and transcriptional activation. Involved in spermatogenesis by regulating expression of target genes such as PRM1 and TNP1 which are required for packaging and condensation of sperm chromatin. Involved in obesity resistance through regulation of metabolic genes such as PPARA and UCP1. The protein is Lysine-specific demethylase 3A (KDM3A) of Homo sapiens (Human).